Reading from the N-terminus, the 1439-residue chain is Fanconi anemia group D2 protein (1439 aa).

Lysine 563 is covalently cross-linked (Glycyl lysine isopeptide (Lys-Gly) (interchain with G-Cter in ubiquitin)).

Belongs to the Fanconi anemia protein FANCD2 family. As to quaternary structure, homodimer; cannot be ubiquitinated and does not bind DNA. Part of a FANCI-FANCD2 heterodimeric complex that binds and scans dsDNA for DNA damage. Interacts directly with FANCE and FANCI. Interacts with USP1 and MEN1. The ubiquitinated form specifically interacts with BRCA1 and BLM. Both the nonubiquitinated and the monoubiquitinated forms interact with BRCA2; this interaction is mediated by phosphorylated FANCG and the complex also includes XCCR3. The ubiquitinated form specifically interacts with MTMR15/FAN1 (via UBZ-type zinc finger), leading to recruit MTMR15/FAN1 to sites of DNA damage. Interacts with DCLRE1B/Apollo. Interacts with POLN. Interacts with UHRF1 and UHRF2; these interactions promote FANCD2 activation. In terms of processing, monoubiquitinated on Lys-563 during S phase and upon genotoxic stress. Deubiquitinated by USP1 as cells enter G2/M, or once DNA repair is completed. Monoubiquitination prevents DNA release from the FANCI-FANCD2 complex. FANCD2 is only ubiquitinated in the FANCI-FANCD2 complex and the monoubiquitination of FANCD2 is promoted by phosphorylation of FANCI. Phosphorylated in response to various genotoxic stresses by ATM and/or ATR.

It localises to the nucleus. Functionally, required for maintenance of chromosomal stability. Promotes accurate and efficient pairing of homologs during meiosis. Involved in the repair of DNA double-strand breaks, both by homologous recombination and single-strand annealing. The FANCI-FANCD2 complex binds and scans double-stranded DNA (dsDNA) for DNA damage; this complex stalls at DNA junctions between double-stranded DNA and single-stranded DNA. May participate in S phase and G2 phase checkpoint activation upon DNA damage. Plays a role in preventing breakage and loss of missegregating chromatin at the end of cell division, particularly after replication stress. Required for the targeting, or stabilization, of BLM to non-centromeric abnormal structures induced by replicative stress. Promotes BRCA2/FANCD1 loading onto damaged chromatin. May also be involved in B-cell immunoglobulin isotype switching. This Gallus gallus (Chicken) protein is Fanconi anemia group D2 protein.